A 330-amino-acid polypeptide reads, in one-letter code: tRNA U34 carboxymethyltransferase (330 aa).

Carboxy-S-adenosyl-L-methionine-binding positions include Lys91, Trp105, Lys110, Gly130, 152–154, 181–182, Met196, Tyr200, and Arg315; these read DPS and IE.

Belongs to the class I-like SAM-binding methyltransferase superfamily. CmoB family. Homotetramer.

It carries out the reaction carboxy-S-adenosyl-L-methionine + 5-hydroxyuridine(34) in tRNA = 5-carboxymethoxyuridine(34) in tRNA + S-adenosyl-L-homocysteine + H(+). Its function is as follows. Catalyzes carboxymethyl transfer from carboxy-S-adenosyl-L-methionine (Cx-SAM) to 5-hydroxyuridine (ho5U) to form 5-carboxymethoxyuridine (cmo5U) at position 34 in tRNAs. The chain is tRNA U34 carboxymethyltransferase from Shewanella halifaxensis (strain HAW-EB4).